Here is a 456-residue protein sequence, read N- to C-terminus: Bifunctional protein GlmU (456 aa).

The segment at 1 to 229 is pyrophosphorylase; that stretch reads MTKKALSAVI…VMEVEGANNR (229 aa). Residues 11–14, Lys25, Gln76, 81–82, 103–105, Gly140, Glu154, Asn169, and Asn227 each bind UDP-N-acetyl-alpha-D-glucosamine; these read LAAG, GT, and YGD. Asp105 serves as a coordination point for Mg(2+). Residue Asn227 participates in Mg(2+) binding. The segment at 230–250 is linker; that stretch reads LQLAALERYLQNKQASKLLLE. Residues 251–456 form an N-acetyltransferase region; that stretch reads GVMIYDPARF…QGWQRPIKKK (206 aa). Residues Arg333 and Lys351 each coordinate UDP-N-acetyl-alpha-D-glucosamine. His363 acts as the Proton acceptor in catalysis. Positions 366 and 377 each coordinate UDP-N-acetyl-alpha-D-glucosamine. Acetyl-CoA is bound by residues Ala380, 386–387, Ser405, Ala423, and Arg440; that span reads NY.

In the N-terminal section; belongs to the N-acetylglucosamine-1-phosphate uridyltransferase family. It in the C-terminal section; belongs to the transferase hexapeptide repeat family. Homotrimer. Mg(2+) is required as a cofactor.

The protein resides in the cytoplasm. The enzyme catalyses alpha-D-glucosamine 1-phosphate + acetyl-CoA = N-acetyl-alpha-D-glucosamine 1-phosphate + CoA + H(+). It carries out the reaction N-acetyl-alpha-D-glucosamine 1-phosphate + UTP + H(+) = UDP-N-acetyl-alpha-D-glucosamine + diphosphate. The protein operates within nucleotide-sugar biosynthesis; UDP-N-acetyl-alpha-D-glucosamine biosynthesis; N-acetyl-alpha-D-glucosamine 1-phosphate from alpha-D-glucosamine 6-phosphate (route II): step 2/2. It participates in nucleotide-sugar biosynthesis; UDP-N-acetyl-alpha-D-glucosamine biosynthesis; UDP-N-acetyl-alpha-D-glucosamine from N-acetyl-alpha-D-glucosamine 1-phosphate: step 1/1. Its pathway is bacterial outer membrane biogenesis; LPS lipid A biosynthesis. Its function is as follows. Catalyzes the last two sequential reactions in the de novo biosynthetic pathway for UDP-N-acetylglucosamine (UDP-GlcNAc). The C-terminal domain catalyzes the transfer of acetyl group from acetyl coenzyme A to glucosamine-1-phosphate (GlcN-1-P) to produce N-acetylglucosamine-1-phosphate (GlcNAc-1-P), which is converted into UDP-GlcNAc by the transfer of uridine 5-monophosphate (from uridine 5-triphosphate), a reaction catalyzed by the N-terminal domain. The sequence is that of Bifunctional protein GlmU from Haemophilus influenzae (strain PittGG).